The sequence spans 435 residues: MGDWSFLGRLLENAQEHSTVIGKVWLTVLFIFRILVLGAAAEDVWGDEQSDFTCNTQQPGCENVCYDRAFPISHIRFWALQIIFVSTPTLIYLGHVLHIVRMEEKKKEREEEEQLKRESPSPKEPPQDNPSSRDDRGRVRMAGALLRTYVFNIIFKTLFEVGFIAGQYFLYGFELKPLYRCDRWPCPNTVDCFISRPTEKTIFIIFMLAVACASLLLNMLEIYHLGWKKLKQGVTSRLGPDASEAPLGTADPPPLPPSSRPPAVAIGFPPYYAHTAAPLGQARAVGYPGAPPPAADFKLLALTEARGKGQSAKLYNGHHHLLMTEQNWANQAAERQPPALKAYPAASTPAAPSPVGSSSPPLAHEAEAGAAPLLLDGSGSSLEGSALAGTPEEEEQAVTTAAQMHQPPLPLGDPGRASKASRASSGRARPEDLAI.

Residues G2–Q15 lie within the membrane without spanning it. Topologically, residues E16 to T19 are cytoplasmic. Residues V20 to A40 traverse the membrane as a helical segment. The Extracellular portion of the chain corresponds to A41 to P71. 3 disulfides stabilise this stretch: C54-C192, C61-C186, and C65-C181. A helical membrane pass occupies residues I72–Y92. At L93–N152 the chain is on the cytoplasmic side. A compositionally biased stretch (basic and acidic residues) spans E108–S121. The segment at E108–R136 is disordered. A helical transmembrane segment spans residues I153–F173. The Extracellular portion of the chain corresponds to E174–T201. Residues I202 to I222 traverse the membrane as a helical segment. The Cytoplasmic portion of the chain corresponds to Y223–I435. Residues A332 to I435 are disordered. 2 stretches are compositionally biased toward low complexity: residues A342–G389 and G415–R427.

This sequence belongs to the connexin family. Alpha-type (group II) subfamily. As to quaternary structure, a hemichannel or connexon is composed of a hexamer of connexins. A functional gap junction is formed by the apposition of two hemichannels. Forms heteromeric channels with GJA8.

It is found in the cell membrane. Its subcellular location is the cell junction. It localises to the gap junction. Its function is as follows. Structural component of lens fiber gap junctions. Gap junctions are dodecameric channels that connect the cytoplasm of adjoining cells. They are formed by the docking of two hexameric hemichannels, one from each cell membrane. Small molecules and ions diffuse from one cell to a neighboring cell via the central pore. The sequence is that of Gap junction alpha-3 protein (GJA3) from Homo sapiens (Human).